Here is a 497-residue protein sequence, read N- to C-terminus: Serine/threonine-protein kinase cst-1 (497 aa).

Positions 1 to 27 (MPPSTDSSRRNSEEGSSDGFKLDSSAL) are disordered. Residues 35–286 (FDIVGKLGEG…ALRLCEHTFI (252 aa)) form the Protein kinase domain. Residues 41–49 (LGEGSYGSV) and Lys-64 contribute to the ATP site. Asp-154 functions as the Proton acceptor in the catalytic mechanism. A disordered region spans residues 367–416 (KSAYIPGSSKNGNSPRVQPPGHTASASDPSKNQPFAQDGTGPNFQLGTSE). A compositionally biased stretch (polar residues) spans 390–416 (ASASDPSKNQPFAQDGTGPNFQLGTSE). The SARAH domain maps to 446–493 (FEFLRNITLDELIRRKESLDSEMEEEIRELQRRYKTKRQPILDVIEIK). The stretch at 450 to 486 (RNITLDELIRRKESLDSEMEEEIRELQRRYKTKRQPI) forms a coiled coil.

The protein belongs to the protein kinase superfamily. STE Ser/Thr protein kinase family. STE20 subfamily. Interacts with rsf-1 (via SARAH domain); the interaction is required for the phosphorylation of cst-1. Requires Mg(2+) as cofactor. Post-translationally, proteolytically cleaved by caspase-3 during apoptosis which results in kinase activation. Phosphorylated. In terms of tissue distribution, widely expressed in epidermal cells.

The enzyme catalyses L-seryl-[protein] + ATP = O-phospho-L-seryl-[protein] + ADP + H(+). The catalysed reaction is L-threonyl-[protein] + ATP = O-phospho-L-threonyl-[protein] + ADP + H(+). In terms of biological role, serine/threonine-protein kinase which extends lifespan and delays tissue aging, probably by activating daf-16. This Caenorhabditis elegans protein is Serine/threonine-protein kinase cst-1.